The primary structure comprises 315 residues: Glycine--tRNA ligase alpha subunit (315 aa).

The protein belongs to the class-II aminoacyl-tRNA synthetase family. Tetramer of two alpha and two beta subunits.

The protein localises to the cytoplasm. The catalysed reaction is tRNA(Gly) + glycine + ATP = glycyl-tRNA(Gly) + AMP + diphosphate. This chain is Glycine--tRNA ligase alpha subunit, found in Pseudomonas aeruginosa (strain LESB58).